We begin with the raw amino-acid sequence, 103 residues long: Cyclotide vibi-I (103 aa).

The first 9 residues, 1–9, serve as a signal peptide directing secretion; that stretch reads AAFALPAFA. Positions 10–69 are excised as a propeptide; that stretch reads SFEKDVITPAALEAVLNRKAPLSNIMMENDAILNVIANVKTVISNPVLEEALLKTNHGVN. A cross-link (cyclopeptide (Gly-Asn)) is located at residues 70–99; sequence GIPCGESCVWIPCLTSTVGCSCKSKVCYRN. Cystine bridges form between cysteine 73/cysteine 89, cysteine 77/cysteine 91, and cysteine 82/cysteine 96. Residues 100-103 constitute a propeptide that is removed on maturation; the sequence is SLDN.

This is a cyclic peptide.

Probably participates in a plant defense mechanism. The chain is Cyclotide vibi-I from Viola biflora (Yellow wood violet).